A 77-amino-acid chain; its full sequence is Conotoxin Vc1 (77 aa).

An N-terminal signal peptide occupies residues 1-22; that stretch reads MRTSGRLLLLCLAVGLLLESQA. 2 consecutive propeptides follow at residues 23-58 and 73-77; these read HPNADAGDATRDVGSDRTSVELSKMLKGWQAEKGQR and RRSFY.

The protein belongs to the conotoxin H superfamily. In terms of tissue distribution, expressed by the venom duct.

The protein localises to the secreted. Its function is as follows. Probable toxin. This is Conotoxin Vc1 from Conus victoriae (Queen Victoria cone).